A 149-amino-acid chain; its full sequence is D-aminoacyl-tRNA deacylase (149 aa).

The Gly-cisPro motif, important for rejection of L-amino acids signature appears at 137–138; that stretch reads GP.

The protein belongs to the DTD family. In terms of assembly, homodimer.

It is found in the cytoplasm. The catalysed reaction is glycyl-tRNA(Ala) + H2O = tRNA(Ala) + glycine + H(+). It carries out the reaction a D-aminoacyl-tRNA + H2O = a tRNA + a D-alpha-amino acid + H(+). An aminoacyl-tRNA editing enzyme that deacylates mischarged D-aminoacyl-tRNAs. Also deacylates mischarged glycyl-tRNA(Ala), protecting cells against glycine mischarging by AlaRS. Acts via tRNA-based rather than protein-based catalysis; rejects L-amino acids rather than detecting D-amino acids in the active site. By recycling D-aminoacyl-tRNA to D-amino acids and free tRNA molecules, this enzyme counteracts the toxicity associated with the formation of D-aminoacyl-tRNA entities in vivo and helps enforce protein L-homochirality. The protein is D-aminoacyl-tRNA deacylase of Halothermothrix orenii (strain H 168 / OCM 544 / DSM 9562).